A 1002-amino-acid polypeptide reads, in one-letter code: Copper-transporting ATPase HMA5 (1002 aa).

The segment covering 32 to 48 (RPRYPSMPRRPRSAAVA) has biased composition (low complexity). The disordered stretch occupies residues 32–63 (RPRYPSMPRRPRSAAVAGEGGEGGGGGGDGDL). Residues 49 to 60 (GEGGEGGGGGGD) are compositionally biased toward gly residues. HMA domains lie at 75-141 (KVAV…FEAK), 153-219 (LVCR…FEAI), and 228-294 (SRID…SGDL). Cu(+)-binding residues include cysteine 86, cysteine 89, cysteine 164, and cysteine 167. A run of 8 helical transmembrane segments spans residues 320 to 340 (FLWSLVFTIPVFLTSMVFMYI), 354 to 374 (MMSIGELLRWILSTPVQFVIG), 392 to 412 (MDVLIALGTNTAYFYSVYSIL), 425 to 445 (FFETSSMLISFILLGKYLEIL), 585 to 605 (VFVPLVIILSLLTWLAWFLAG), 624 to 644 (LALQFGISVMVIACPCALGLA), 943 to 963 (YVWALGYNIIGIPIAAGVLFP), and 972 to 992 (WVAGAAMAASSVSVVCWSLLL).

Belongs to the cation transport ATPase (P-type) (TC 3.A.3) family. Type IB subfamily. As to expression, expressed in root pericycle cells, xylem region of diffuse vascular bundles in the first node, and vascular tissues of peduncle, rachis and husk.

The protein localises to the cell membrane. It carries out the reaction Cu(+)(in) + ATP + H2O = Cu(+)(out) + ADP + phosphate + H(+). In terms of biological role, copper (Cu) transporter that plays an essential role in promoting translocation of Cu from roots to shoots. Involved in loading Cu to the xylem of the roots and other organs, including panicles. This Oryza sativa subsp. japonica (Rice) protein is Copper-transporting ATPase HMA5.